The following is a 374-amino-acid chain: UPF0754 membrane protein SAR1937 (374 aa).

The next 2 membrane-spanning stretches (helical) occupy residues 4–24 and 354–374; these read LFII…TNVI and SLGF…AIFV.

This sequence belongs to the UPF0754 family.

It is found in the cell membrane. The chain is UPF0754 membrane protein SAR1937 from Staphylococcus aureus (strain MRSA252).